Reading from the N-terminus, the 357-residue chain is S-adenosyl-L-methionine:benzoic acid/salicylic acid carboxyl methyltransferase 3 (357 aa).

Position 18 (tyrosine 18) interacts with S-adenosyl-L-homocysteine. Glutamine 25 is a benzoate binding site. The S-adenosyl-L-homocysteine site is built by cysteine 59, asparagine 64, aspartate 96, leucine 97, serine 135, and phenylalanine 136. Benzoate is bound at residue tryptophan 157. Mg(2+) is bound by residues asparagine 168, aspartate 254, phenylalanine 256, and asparagine 257. Glutamine 260 is a benzoate binding site.

This sequence belongs to the methyltransferase superfamily. Type-7 methyltransferase family.

It catalyses the reaction benzoate + S-adenosyl-L-methionine = methyl benzoate + S-adenosyl-L-homocysteine. It participates in aromatic compound metabolism. In terms of biological role, converts benzoic acid into the volatile ester methyl benzoates. This scent, mostly produced in a rhythmical, diurnal manner, attracts the pollinators. The protein is S-adenosyl-L-methionine:benzoic acid/salicylic acid carboxyl methyltransferase 3 of Petunia hybrida (Petunia).